We begin with the raw amino-acid sequence, 178 residues long: Large ribosomal subunit protein uL6 (178 aa).

Belongs to the universal ribosomal protein uL6 family. As to quaternary structure, part of the 50S ribosomal subunit.

Functionally, this protein binds to the 23S rRNA, and is important in its secondary structure. It is located near the subunit interface in the base of the L7/L12 stalk, and near the tRNA binding site of the peptidyltransferase center. This Corynebacterium urealyticum (strain ATCC 43042 / DSM 7109) protein is Large ribosomal subunit protein uL6.